The following is a 708-amino-acid chain: Leukotoxin translocation ATP-binding protein LktB (708 aa).

The Peptidase C39 domain occupies 1–126 (MEANHQRNDL…ACYQGQLILV (126 aa)). The ABC transmembrane type-1 domain maps to 155 to 437 (FLETLIVSIF…LAQLWQDFQQ (283 aa)). A run of 5 helical transmembrane segments spans residues 159–179 (LIVS…FQVV), 192–212 (LNII…LSGL), 270–290 (ALTS…MWYY), 296–316 (LVIL…SPIL), and 389–409 (VMVI…LSIG). In terms of domain architecture, ABC transporter spans 469–704 (ISFKNIRFRY…SNGLYSYLHQ (236 aa)). 503-510 (GRSGSGKS) serves as a coordination point for ATP.

Belongs to the ABC transporter superfamily. Protein-1 exporter (TC 3.A.1.109) family. Homodimer.

The protein resides in the cell inner membrane. It catalyses the reaction ATP + H2O + proteinSide 1 = ADP + phosphate + proteinSide 2.. In terms of biological role, part of the ABC transporter complex LktBD involved in leukotoxin export. Transmembrane domains (TMD) form a pore in the inner membrane and the ATP-binding domain (NBD) is responsible for energy generation. This chain is Leukotoxin translocation ATP-binding protein LktB (lktB), found in Mannheimia haemolytica (Pasteurella haemolytica).